A 94-amino-acid polypeptide reads, in one-letter code: MAFGTDPTPDGLANPPIDDLMKHADSKYALAIFAAKRARQINSYFTQLNEGLLQNVGPLVEYQNNEKPLSIAFREIDEGLLEETLGEDDANEGN.

Belongs to the RNA polymerase subunit omega family. In terms of assembly, the RNAP catalytic core consists of 2 alpha, 1 beta, 1 beta' and 1 omega subunit. When a sigma factor is associated with the core the holoenzyme is formed, which can initiate transcription.

The enzyme catalyses RNA(n) + a ribonucleoside 5'-triphosphate = RNA(n+1) + diphosphate. Functionally, promotes RNA polymerase assembly. Latches the N- and C-terminal regions of the beta' subunit thereby facilitating its interaction with the beta and alpha subunits. The chain is DNA-directed RNA polymerase subunit omega from Bifidobacterium longum subsp. infantis (strain ATCC 15697 / DSM 20088 / JCM 1222 / NCTC 11817 / S12).